The chain runs to 252 residues: Petrobactin import ATP-binding protein YclP (252 aa).

One can recognise an ABC transporter domain in the interval 2–236 (VEVRNVSKQY…SVLEEIYDMT (235 aa)). 34-41 (GPNGAGKS) serves as a coordination point for ATP.

The protein belongs to the ABC transporter superfamily. The complex is composed of two ATP-binding proteins (YclP), two transmembrane proteins (YclN and YclO) and a solute-binding protein (YclQ).

Its subcellular location is the cell membrane. It carries out the reaction a Fe(III)-siderophore(out) + ATP + H2O = a Fe(III)-siderophore(in) + ADP + phosphate + H(+). Its function is as follows. Part of the ABC transporter complex YclNOPQ involved in uptake of ferric-petrobactin. Petrobactin is a photoreactive 3,4-catecholate siderophore produced by many members of the B.cereus group, including B.anthracis. Probably responsible for energy coupling to the transport system. The protein is Petrobactin import ATP-binding protein YclP (yclP) of Bacillus subtilis (strain 168).